We begin with the raw amino-acid sequence, 362 residues long: Protein-arginine kinase (362 aa).

The Phosphagen kinase C-terminal domain maps to 24–255; it reads IVLSSRIRLA…QQLIAQERMA (232 aa). Residues 27–31, H92, R126, 177–181, and 208–213 each bind ATP; these read SSRIR, RASVM, and RGTYGE. An RDXXRA motif of the pArg binding pocket involved in allosteric regulation motif is present at residues 338–343; sequence RDVRRA.

It belongs to the ATP:guanido phosphotransferase family.

The enzyme catalyses L-arginyl-[protein] + ATP = N(omega)-phospho-L-arginyl-[protein] + ADP + H(+). Its activity is regulated as follows. Appears to be allosterically activated by the binding of pArg-containing polypeptides to the pArg-binding pocket localized in the C-terminal domain of McsB. In terms of biological role, catalyzes the specific phosphorylation of arginine residues in a large number of proteins. Is part of the bacterial stress response system. Protein arginine phosphorylation has a physiologically important role and is involved in the regulation of many critical cellular processes, such as protein homeostasis, motility, competence, and stringent and stress responses, by regulating gene expression and protein activity. In Geobacillus sp. (strain WCH70), this protein is Protein-arginine kinase.